A 364-amino-acid chain; its full sequence is Glutamate 5-kinase (364 aa).

An ATP-binding site is contributed by lysine 7. Positions 47, 134, and 146 each coordinate substrate. ATP-binding positions include threonine 166–aspartate 167 and threonine 209–lysine 215. Residues glutamine 274 to valine 349 enclose the PUA domain.

Belongs to the glutamate 5-kinase family.

Its subcellular location is the cytoplasm. It carries out the reaction L-glutamate + ATP = L-glutamyl 5-phosphate + ADP. It participates in amino-acid biosynthesis; L-proline biosynthesis; L-glutamate 5-semialdehyde from L-glutamate: step 1/2. In terms of biological role, catalyzes the transfer of a phosphate group to glutamate to form L-glutamate 5-phosphate. The polypeptide is Glutamate 5-kinase (Prochlorococcus marinus (strain SARG / CCMP1375 / SS120)).